We begin with the raw amino-acid sequence, 740 residues long: Ribosome-releasing factor 2, mitochondrial (740 aa).

The N-terminal 29 residues, 1–29 (MLKYAWQSGPKQSNRWLWHLSNQIWKRSY), are a transit peptide targeting the mitochondrion. The 280-residue stretch at 31-310 (SKIRNIGILA…AVNAYLPAPE (280 aa)) folds into the tr-type G domain. GTP is bound by residues 40–47 (AHIDAGKT), 104–108 (DTPGH), and 158–161 (NKMD).

Belongs to the TRAFAC class translation factor GTPase superfamily. Classic translation factor GTPase family. EF-G/EF-2 subfamily.

It is found in the mitochondrion. Its function is as follows. Mitochondrial GTPase that mediates the disassembly of ribosomes from messenger RNA at the termination of mitochondrial protein biosynthesis. Not involved in the GTP-dependent ribosomal translocation step during translation elongation. This Drosophila melanogaster (Fruit fly) protein is Ribosome-releasing factor 2, mitochondrial.